The chain runs to 259 residues: Hydroxyacylglutathione hydrolase (259 aa).

7 residues coordinate Zn(2+): histidine 56, histidine 58, aspartate 60, histidine 61, histidine 112, aspartate 133, and histidine 171.

The protein belongs to the metallo-beta-lactamase superfamily. Glyoxalase II family. Monomer. Zn(2+) serves as cofactor.

It carries out the reaction an S-(2-hydroxyacyl)glutathione + H2O = a 2-hydroxy carboxylate + glutathione + H(+). It functions in the pathway secondary metabolite metabolism; methylglyoxal degradation; (R)-lactate from methylglyoxal: step 2/2. Thiolesterase that catalyzes the hydrolysis of S-D-lactoyl-glutathione to form glutathione and D-lactic acid. In Pseudomonas putida (strain GB-1), this protein is Hydroxyacylglutathione hydrolase.